A 268-amino-acid polypeptide reads, in one-letter code: Putative F-box protein At3g23420 (268 aa).

One can recognise an F-box domain in the interval 5–51; it reads PRDLSDLPRNMAEEVLSRVPMTSLRRLRFTCKKWNTLSRCRSFAKKH.

This chain is Putative F-box protein At3g23420, found in Arabidopsis thaliana (Mouse-ear cress).